A 249-amino-acid polypeptide reads, in one-letter code: Ribosomal RNA small subunit methyltransferase J (249 aa).

S-adenosyl-L-methionine is bound by residues 99–100, 115–116, 151–152, and Asp169; these read RD, ER, and SS.

The protein belongs to the methyltransferase superfamily. RsmJ family.

It localises to the cytoplasm. It catalyses the reaction guanosine(1516) in 16S rRNA + S-adenosyl-L-methionine = N(2)-methylguanosine(1516) in 16S rRNA + S-adenosyl-L-homocysteine + H(+). Functionally, specifically methylates the guanosine in position 1516 of 16S rRNA. In Shewanella oneidensis (strain ATCC 700550 / JCM 31522 / CIP 106686 / LMG 19005 / NCIMB 14063 / MR-1), this protein is Ribosomal RNA small subunit methyltransferase J.